Consider the following 194-residue polypeptide: Large ribosomal subunit protein eL15 (194 aa).

The segment at 164-194 is disordered; it reads SAGKKGRGLRNKGKGAEKIRPSIRANEGKGK. The segment covering 167 to 176 has biased composition (basic residues); the sequence is KKGRGLRNKG. A compositionally biased stretch (basic and acidic residues) spans 177-194; the sequence is KGAEKIRPSIRANEGKGK.

This sequence belongs to the eukaryotic ribosomal protein eL15 family.

In Pyrococcus abyssi (strain GE5 / Orsay), this protein is Large ribosomal subunit protein eL15 (rpl15e).